Consider the following 155-residue polypeptide: Small ribosomal subunit protein uS7c (155 aa).

This sequence belongs to the universal ribosomal protein uS7 family. As to quaternary structure, part of the 30S ribosomal subunit.

It is found in the plastid. The protein resides in the chloroplast. Its function is as follows. One of the primary rRNA binding proteins, it binds directly to 16S rRNA where it nucleates assembly of the head domain of the 30S subunit. The protein is Small ribosomal subunit protein uS7c (rps7) of Sagittaria latifolia (Broadleaf arrowhead).